The sequence spans 397 residues: Protochlorophyllide reductase, chloroplastic (397 aa).

The N-terminal 57 residues, 1–57, are a transit peptide targeting the chloroplast; sequence MALTMSAKSVSARAQVSSKAQAAPAVAVSGRTSSRVMPAPALAARSSVARTPLVVCA.

It belongs to the short-chain dehydrogenases/reductases (SDR) family. POR subfamily.

It localises to the plastid. Its subcellular location is the chloroplast. It catalyses the reaction chlorophyllide a + NADP(+) = protochlorophyllide a + NADPH + H(+). The protein operates within porphyrin-containing compound metabolism; chlorophyll biosynthesis. In terms of biological role, phototransformation of protochlorophyllide (Pchlide) to chlorophyllide (Chlide). This Chlamydomonas reinhardtii (Chlamydomonas smithii) protein is Protochlorophyllide reductase, chloroplastic (PORA).